Here is a 177-residue protein sequence, read N- to C-terminus: Disulfide bond formation protein B (177 aa).

The Cytoplasmic segment spans residues 1-14 (MLALLKQFSEKRFV). Residues 15–31 (WFLLAFSSLALESTALY) traverse the membrane as a helical segment. The Periplasmic portion of the chain corresponds to 32–49 (FQYGMGLQPCVLCVYERL). The cysteines at positions 41 and 44 are disulfide-linked. The helical transmembrane segment at 50–65 (AMIGLFVAGIIALLQP) threads the bilayer. The Cytoplasmic portion of the chain corresponds to 66–72 (LAFILRL). Residues 73–90 (IALALGLFSSIKGLLISF) form a helical membrane-spanning segment. At 91-145 (RHLDLQMNPAPWKQCEFIPNFPETLPFHQWFPFIFNPTGSCNESQWSLFGLTMVQ) the chain is on the periplasmic side. Cys105 and Cys131 are disulfide-bonded. Residues 146-164 (WLVVIFSLYVVILTLLLIA) traverse the membrane as a helical segment. Topologically, residues 165–177 (QVIKTRKQRRLFN) are cytoplasmic.

It belongs to the DsbB family.

It is found in the cell inner membrane. Functionally, required for disulfide bond formation in some periplasmic proteins. Acts by oxidizing the DsbA protein. The polypeptide is Disulfide bond formation protein B (Haemophilus influenzae (strain 86-028NP)).